The chain runs to 392 residues: Serpin B11 (392 aa).

Residues 341 to 365 (EEGTEAAAATGDSIAVKSLPMRAQF) are RCL.

It belongs to the serpin family. Ov-serpin subfamily. In terms of tissue distribution, detected in a restricted number of tissues, including lung, placenta, prostate, and tonsil.

The protein localises to the cytoplasm. Functionally, has no serine protease inhibitory activity, probably due to variants in the scaffold impairing conformational change. The chain is Serpin B11 (SERPINB11) from Homo sapiens (Human).